The primary structure comprises 547 residues: Chaperonin GroEL (547 aa).

ATP contacts are provided by residues 30 to 33 (TLGP), Lys-51, 87 to 91 (DGTTT), Gly-415, and Asp-496.

It belongs to the chaperonin (HSP60) family. Forms a cylinder of 14 subunits composed of two heptameric rings stacked back-to-back. Interacts with the co-chaperonin GroES.

The protein resides in the cytoplasm. The catalysed reaction is ATP + H2O + a folded polypeptide = ADP + phosphate + an unfolded polypeptide.. Together with its co-chaperonin GroES, plays an essential role in assisting protein folding. The GroEL-GroES system forms a nano-cage that allows encapsulation of the non-native substrate proteins and provides a physical environment optimized to promote and accelerate protein folding. This Chlorobaculum parvum (strain DSM 263 / NCIMB 8327) (Chlorobium vibrioforme subsp. thiosulfatophilum) protein is Chaperonin GroEL.